The sequence spans 291 residues: ATP synthase gamma chain (291 aa).

The protein belongs to the ATPase gamma chain family. As to quaternary structure, F-type ATPases have 2 components, CF(1) - the catalytic core - and CF(0) - the membrane proton channel. CF(1) has five subunits: alpha(3), beta(3), gamma(1), delta(1), epsilon(1). CF(0) has three main subunits: a, b and c.

The protein localises to the cell inner membrane. In terms of biological role, produces ATP from ADP in the presence of a proton gradient across the membrane. The gamma chain is believed to be important in regulating ATPase activity and the flow of protons through the CF(0) complex. This Xanthobacter autotrophicus (strain ATCC BAA-1158 / Py2) protein is ATP synthase gamma chain.